The chain runs to 332 residues: Cysteine and histidine-rich domain-containing protein 1 (332 aa).

A2 is subject to N-acetylalanine. An interaction with PPP5C region spans residues 2–77; that stretch reads ALLCYNRGCG…KPPEPVKPEV (76 aa). Positions 5, 10, 24, 27, 42, and 43 each coordinate Zn(2+). CHORD domains lie at 5–64 and 157–216; these read CYNR…KGRH and CKNG…KGKH. T47 is subject to Phosphothreonine. S51 carries the phosphoserine modification. 10 residues coordinate Zn(2+): C59, H64, C157, C162, C176, H179, C194, C195, C211, and H216. Positions 65-316 are interaction with HSP90AA1 and HSP90AB1; it reads NSEKPPEPVK…AEPMQWASLE (252 aa). A CS domain is found at 227–316; that stretch reads VVPCRHDWHQ…AEPMQWASLE (90 aa).

As to quaternary structure, interacts with HSP90AA1, ROCK1 and ROCK2. Interacts with HSP90AB1 and PPP5C. Underexpressed in many breast and lung cancers.

Its function is as follows. Regulates centrosome duplication, probably by inhibiting the kinase activity of ROCK2. Proposed to act as co-chaperone for HSP90. May play a role in the regulation of NOD1 via a HSP90 chaperone complex. In vitro, has intrinsic chaperone activity. This function may be achieved by inhibiting association of ROCK2 with NPM1. Plays a role in ensuring the localization of the tyrosine kinase receptor EGFR to the plasma membrane, and thus ensures the subsequent regulation of EGFR activity and EGF-induced actin cytoskeleton remodeling. Involved in stress response. Prevents tumorigenesis. In Homo sapiens (Human), this protein is Cysteine and histidine-rich domain-containing protein 1 (CHORDC1).